The primary structure comprises 174 residues: Shikimate kinase 2 (174 aa).

Position 12–17 (12–17) interacts with ATP; it reads GAGKTT. Mg(2+) contacts are provided by Thr16 and Asp32. Substrate-binding residues include Asp34, Arg58, and Gly79. The segment at 112 to 126 is LID domain; sequence AEDPEEAQRPSLTGK. ATP is bound at residue Arg120. Arg139 is a binding site for substrate. Residue Gln155 participates in ATP binding.

It belongs to the shikimate kinase family. AroL subfamily. As to quaternary structure, monomer. Mg(2+) serves as cofactor.

The protein localises to the cytoplasm. It carries out the reaction shikimate + ATP = 3-phosphoshikimate + ADP + H(+). The protein operates within metabolic intermediate biosynthesis; chorismate biosynthesis; chorismate from D-erythrose 4-phosphate and phosphoenolpyruvate: step 5/7. Functionally, catalyzes the specific phosphorylation of the 3-hydroxyl group of shikimic acid using ATP as a cosubstrate. The protein is Shikimate kinase 2 of Yersinia pseudotuberculosis serotype IB (strain PB1/+).